The following is a 209-amino-acid chain: Small ribosomal subunit protein uS4 (209 aa).

Positions serine 98–alanine 164 constitute an S4 RNA-binding domain.

This sequence belongs to the universal ribosomal protein uS4 family. In terms of assembly, part of the 30S ribosomal subunit. Contacts protein S5. The interaction surface between S4 and S5 is involved in control of translational fidelity.

Functionally, one of the primary rRNA binding proteins, it binds directly to 16S rRNA where it nucleates assembly of the body of the 30S subunit. Its function is as follows. With S5 and S12 plays an important role in translational accuracy. This Frankia casuarinae (strain DSM 45818 / CECT 9043 / HFP020203 / CcI3) protein is Small ribosomal subunit protein uS4.